A 524-amino-acid chain; its full sequence is MPLPSCRRREQRPRQSCFQNPECHLRLRARQQRPQESAVQSTLSSSIYFSDHFVLTPPPFQITPTSIQNSTWLPIPTSPAVAAPPLPRCLGGVDGEGAPCAPPPSPIPAGPASSTVSAASSAPATRDYLGGITGHRLGQEDDSGGHEYTSVSGIHVPSSSGVAFVSFGQCPQEVISTDLCLGLGPIAATAPLQPPPPPAAAAAAGSPSATTPEPGHGEATPTTSSSAQFQTQAQQVTRDMWMACAAPKSGRLPTVGSLVYYFPDGHAEQCLSRPQEPLPGRIFLCKVTDVRLGAAATNEALATISLVPIAADDHAFQLQAPADPDPAPAQSQSLVSFVKPLTYTDVTKNRFMVPKDDAAAGVLPHIQLNDDVPLRIKDLSGKEWAFNYTWKAHTRMFRNGWMEFSNANGLVTGDNAVFMRRGNGEMFMAVRRTRNRPAPFSVEEVIEAVWRAARREPFEVSYCLRQDGDEFVVPRDIVDDGLRARFAPGMAVNFVWAVEDGKLPTIGPQGEVISIENYATSIGA.

Disordered stretches follow at residues 94–152 and 191–232; these read DGEG…TSVS and PLQP…FQTQ. Over residues 100–109 the composition is skewed to pro residues; the sequence is CAPPPSPIPA. Composition is skewed to low complexity over residues 110 to 124 and 200 to 232; these read GPAS…SAPA and AAAA…FQTQ. Residues 336–434 constitute a DNA-binding region (TF-B3); sequence SFVKPLTYTD…EMFMAVRRTR (99 aa).

It is found in the nucleus. The polypeptide is B3 domain-containing protein Os07g0183700 (Oryza sativa subsp. japonica (Rice)).